The following is a 271-amino-acid chain: Extracellular metalloprotease ARB_05317 (271 aa).

The N-terminal stretch at 1–19 (MRFSVLLTGLAAAGSIATA) is a signal peptide. The N-linked (GlcNAc...) asparagine glycan is linked to Asn136. His185 serves as a coordination point for Zn(2+). Glu186 is an active-site residue. His189 contributes to the Zn(2+) binding site. The N-linked (GlcNAc...) asparagine glycan is linked to Asn200. A disulfide bridge connects residues Cys222 and Cys248.

The protein belongs to the peptidase M43B family.

The protein resides in the secreted. Its function is as follows. Secreted metalloproteinase that allows assimilation of proteinaceous substrates. Plays a pivotal role as a pathogenicity determinant during infections and contributes to the ability of the pathogen to persist within the mammalian host. The protein is Extracellular metalloprotease ARB_05317 of Arthroderma benhamiae (strain ATCC MYA-4681 / CBS 112371) (Trichophyton mentagrophytes).